The following is an 89-amino-acid chain: Small ribosomal subunit protein uS15 (89 aa).

It belongs to the universal ribosomal protein uS15 family. Part of the 30S ribosomal subunit. Forms a bridge to the 50S subunit in the 70S ribosome, contacting the 23S rRNA.

Functionally, one of the primary rRNA binding proteins, it binds directly to 16S rRNA where it helps nucleate assembly of the platform of the 30S subunit by binding and bridging several RNA helices of the 16S rRNA. Forms an intersubunit bridge (bridge B4) with the 23S rRNA of the 50S subunit in the ribosome. The sequence is that of Small ribosomal subunit protein uS15 from Aliivibrio salmonicida (strain LFI1238) (Vibrio salmonicida (strain LFI1238)).